The primary structure comprises 253 residues: Zinc import ATP-binding protein ZnuC (253 aa).

One can recognise an ABC transporter domain in the interval Val-6–Ala-227. Gly-38 to Ser-45 is a binding site for ATP.

It belongs to the ABC transporter superfamily. Zinc importer (TC 3.A.1.15.5) family. As to quaternary structure, the complex is composed of two ATP-binding proteins (ZnuC), two transmembrane proteins (ZnuB) and a solute-binding protein (ZnuA).

Its subcellular location is the cell inner membrane. The catalysed reaction is Zn(2+)(out) + ATP(in) + H2O(in) = Zn(2+)(in) + ADP(in) + phosphate(in) + H(+)(in). In terms of biological role, part of the ABC transporter complex ZnuABC involved in zinc import. Responsible for energy coupling to the transport system. This Yersinia pestis bv. Antiqua (strain Antiqua) protein is Zinc import ATP-binding protein ZnuC.